We begin with the raw amino-acid sequence, 161 residues long: Large ribosomal subunit protein uL15 (161 aa).

Residues 1-44 (MKLSEIADNAGSRKKRMRVGRGIGSGKGKTAGRGGKGQTARSGV) are disordered. The span at 21–37 (RGIGSGKGKTAGRGGKG) shows a compositional bias: gly residues.

It belongs to the universal ribosomal protein uL15 family. Part of the 50S ribosomal subunit.

Binds to the 23S rRNA. The protein is Large ribosomal subunit protein uL15 of Rhodopseudomonas palustris (strain BisA53).